The sequence spans 211 residues: Cytidylate kinase (211 aa).

An ATP-binding site is contributed by 9 to 17; sequence GPAAAGKGT.

This sequence belongs to the cytidylate kinase family. Type 1 subfamily.

The protein localises to the cytoplasm. It carries out the reaction CMP + ATP = CDP + ADP. The catalysed reaction is dCMP + ATP = dCDP + ADP. The sequence is that of Cytidylate kinase from Paramagnetospirillum magneticum (strain ATCC 700264 / AMB-1) (Magnetospirillum magneticum).